We begin with the raw amino-acid sequence, 421 residues long: Dihydroorotase (421 aa).

Residues H59 and H61 each contribute to the Zn(2+) site. Residues 61 to 63 (HLR) and N93 each bind substrate. Zn(2+)-binding residues include D150, H177, and H230. N276 contributes to the substrate binding site. D303 serves as a coordination point for Zn(2+). The active site involves D303. A substrate-binding site is contributed by H307.

Belongs to the metallo-dependent hydrolases superfamily. DHOase family. Class I DHOase subfamily. Requires Zn(2+) as cofactor.

It catalyses the reaction (S)-dihydroorotate + H2O = N-carbamoyl-L-aspartate + H(+). Its pathway is pyrimidine metabolism; UMP biosynthesis via de novo pathway; (S)-dihydroorotate from bicarbonate: step 3/3. Functionally, catalyzes the reversible cyclization of carbamoyl aspartate to dihydroorotate. This is Dihydroorotase from Desulfotalea psychrophila (strain LSv54 / DSM 12343).